The following is a 1062-amino-acid chain: Carbamoyl phosphate synthase large chain (1062 aa).

A carboxyphosphate synthetic domain region spans residues Met-1–Glu-401. Residues Arg-129, Arg-169, Gly-175, Gly-176, Lys-208, Ile-210, Glu-215, Gly-241, Ile-242, His-243, Gln-284, and Glu-298 each coordinate ATP. The ATP-grasp 1 domain occupies Lys-133 to Ile-327. Residues Gln-284, Glu-298, and Asn-300 each contribute to the Mg(2+) site. Mn(2+) is bound by residues Gln-284, Glu-298, and Asn-300. An oligomerization domain region spans residues Ile-402–Ser-546. The carbamoyl phosphate synthetic domain stretch occupies residues Arg-547 to Lys-929. One can recognise an ATP-grasp 2 domain in the interval Asp-671–Met-861. Residues Arg-707, Asp-746, Leu-748, Glu-752, Gly-777, Val-778, His-779, Ser-780, Gln-820, and Glu-832 each coordinate ATP. Residues Gln-820, Glu-832, and Asn-834 each contribute to the Mg(2+) site. Mn(2+)-binding residues include Gln-820, Glu-832, and Asn-834. An MGS-like domain is found at Met-930 to Lys-1062. Residues Met-930–Lys-1062 are allosteric domain.

It belongs to the CarB family. Composed of two chains; the small (or glutamine) chain promotes the hydrolysis of glutamine to ammonia, which is used by the large (or ammonia) chain to synthesize carbamoyl phosphate. Tetramer of heterodimers (alpha,beta)4. It depends on Mg(2+) as a cofactor. The cofactor is Mn(2+).

It carries out the reaction hydrogencarbonate + L-glutamine + 2 ATP + H2O = carbamoyl phosphate + L-glutamate + 2 ADP + phosphate + 2 H(+). It catalyses the reaction hydrogencarbonate + NH4(+) + 2 ATP = carbamoyl phosphate + 2 ADP + phosphate + 2 H(+). Its pathway is amino-acid biosynthesis; L-arginine biosynthesis; carbamoyl phosphate from bicarbonate: step 1/1. The protein operates within pyrimidine metabolism; UMP biosynthesis via de novo pathway; (S)-dihydroorotate from bicarbonate: step 1/3. Large subunit of the glutamine-dependent carbamoyl phosphate synthetase (CPSase). CPSase catalyzes the formation of carbamoyl phosphate from the ammonia moiety of glutamine, carbonate, and phosphate donated by ATP, constituting the first step of 2 biosynthetic pathways, one leading to arginine and/or urea and the other to pyrimidine nucleotides. The large subunit (synthetase) binds the substrates ammonia (free or transferred from glutamine from the small subunit), hydrogencarbonate and ATP and carries out an ATP-coupled ligase reaction, activating hydrogencarbonate by forming carboxy phosphate which reacts with ammonia to form carbamoyl phosphate. This chain is Carbamoyl phosphate synthase large chain, found in Lactobacillus helveticus (strain DPC 4571).